Here is a 351-residue protein sequence, read N- to C-terminus: Trace amine-associated receptor 2 (351 aa).

At 1-48 (MAVSSEQHELSHFKRTQTKKEKFNCSEYGNRSCPENERSLGVRVAMYS) the chain is on the extracellular side. N-linked (GlcNAc...) asparagine glycans are attached at residues asparagine 24 and asparagine 30. 2 disulfide bridges follow: cysteine 33-cysteine 197 and cysteine 116-cysteine 201. A helical transmembrane segment spans residues 49–69 (FMAGSIFITIFGNLAMIISIS). The Cytoplasmic portion of the chain corresponds to 70–79 (YFKQLHTPTN). A helical transmembrane segment spans residues 80–100 (FLILSMAITDFLLGFTIMPYS). Residues 101–118 (MIRSVENCWYFGLTFCKI) lie on the Extracellular side of the membrane. Residues 119 to 139 (YYSFDLMLSITSIFHLCSVAI) traverse the membrane as a helical segment. Topologically, residues 140–162 (DRFYAICYPLLYSTKITIPVIKR) are cytoplasmic. Residues 163-183 (LLLLCWSVPGAFAFGVVFSEA) form a helical membrane-spanning segment. Residues 184 to 207 (YADGIEGYDILVACSSSCPVMFNK) are Extracellular-facing. Residues 208–228 (LWGTTLFMAGFFTPGSMMVGI) traverse the membrane as a helical segment. Topologically, residues 229-263 (YGKIFAVSRKHAHAINNLRENQNNQVKKDKKAAKT) are cytoplasmic. The helical transmembrane segment at 264–284 (LGIVIGVFLLCWFPCFFTILL) threads the bilayer. Topologically, residues 285–299 (DPFLNFSTPVVLFDA) are extracellular. Asparagine 289 carries an N-linked (GlcNAc...) asparagine glycan. Residues 300–322 (LTWFGYFNSTCNPLIYGFFYPWF) form a helical membrane-spanning segment. The Cytoplasmic portion of the chain corresponds to 323–351 (RRALKYILLGKIFSSCFHNTILCMQKESE).

Belongs to the G-protein coupled receptor 1 family. As to expression, not expressed in the pons, thalamus, hypothalamus, hippocampus, caudate, putamen, frontal cortex, basal forebrain, midbrain or liver.

The protein resides in the cell membrane. Orphan olfactory receptor specific for trace amines. Trace amine compounds are enriched in animal body fluids and act on trace amine-associated receptors (TAARs) to elicit both intraspecific and interspecific innate behaviors. Ligand-binding causes a conformation change that triggers signaling via the G(s)-class of G-proteins which activate adenylate cyclase. The polypeptide is Trace amine-associated receptor 2 (Homo sapiens (Human)).